The chain runs to 682 residues: Methionine--tRNA ligase (682 aa).

The 'HIGH' region motif lies at 14–24 (PYANGPVHLGH). Residues C145, C148, C158, and C161 each contribute to the Zn(2+) site. The 'KMSKS' region motif lies at 331 to 335 (KMSKS). K334 contributes to the ATP binding site. Residues 580 to 682 (AFAAVDLRVA…SGAKPGQRIK (103 aa)) form the tRNA-binding domain.

The protein belongs to the class-I aminoacyl-tRNA synthetase family. MetG type 1 subfamily. In terms of assembly, homodimer. Zn(2+) is required as a cofactor.

Its subcellular location is the cytoplasm. The catalysed reaction is tRNA(Met) + L-methionine + ATP = L-methionyl-tRNA(Met) + AMP + diphosphate. In terms of biological role, is required not only for elongation of protein synthesis but also for the initiation of all mRNA translation through initiator tRNA(fMet) aminoacylation. This Pseudomonas syringae pv. tomato (strain ATCC BAA-871 / DC3000) protein is Methionine--tRNA ligase.